The sequence spans 224 residues: Triosephosphate isomerase (224 aa).

Substrate is bound at residue 9–11; sequence NFK. The active-site Electrophile is the histidine 93. Residue glutamate 141 is the Proton acceptor of the active site. Substrate is bound by residues isoleucine 146, glycine 181, and 202–203; that span reads AS.

Belongs to the triosephosphate isomerase family. In terms of assembly, homotetramer; dimer of dimers.

It is found in the cytoplasm. It catalyses the reaction D-glyceraldehyde 3-phosphate = dihydroxyacetone phosphate. It functions in the pathway carbohydrate biosynthesis; gluconeogenesis. The protein operates within carbohydrate degradation; glycolysis; D-glyceraldehyde 3-phosphate from glycerone phosphate: step 1/1. In terms of biological role, involved in the gluconeogenesis. Catalyzes stereospecifically the conversion of dihydroxyacetone phosphate (DHAP) to D-glyceraldehyde-3-phosphate (G3P). This Pyrobaculum arsenaticum (strain DSM 13514 / JCM 11321 / PZ6) protein is Triosephosphate isomerase.